We begin with the raw amino-acid sequence, 2382 residues long: Nonribosomal peptide synthetase chyA (2382 aa).

The segment at 204-607 is adenylation 1; the sequence is QKCATQPESI…LGRKDHQVKI (404 aa). A Carrier 1 domain is found at 745–821; the sequence is TPTTQNQRIL…DMASVLVKDH (77 aa). An O-(pantetheine 4'-phosphoryl)serine modification is found at S782. Positions 857-1269 are condensation 1; that stretch reads EDVYPCTHMQ…LVPPEDMATL (413 aa). Positions 1294–1687 are adenylation 2; the sequence is GQPDTLAIHS…VGRKDDQVKL (394 aa). The Carrier 2 domain maps to 1833–1909; sequence VPVSIHGRKV…GLSLKCATEN (77 aa). The residue at position 1870 (S1870) is an O-(pantetheine 4'-phosphoryl)serine. The tract at residues 1967 to 2373 is condensation 2; sequence MTLHNFYSRY…FSDVIESLAS (407 aa).

It belongs to the NRP synthetase family.

The protein operates within pigment biosynthesis. Its function is as follows. Nonribosomal peptide synthetase; part of the gene cluster that mediates the biosynthesis of the yellow pigment chrysogine. the NRPS chyA mediates the condensation of anthranilic acid and alanine into the intermediate 2-(2-aminopropanamido)benzoic acid. The remainder of the pathway is highly branched yielding at least 13 chrysogine-related compounds. The malonyl transferase chyE converts 2-(2-aminopropanamido)benzoic acid and 2-(2-aminopropanamido)benzamidine into 2-(2-(2-carboxyacetamido)propanamido)benzoic acid and 3-((1-((2-carbamoylphenyl)amino)-1-oxopropan-2-yl)amino)-3-oxopropanoic acid, respectively. ChyD is an amidase, being responsible for the amidation of the carboxylic acid moiety of 2-(2-aminopropanamido)benzoic acid, 2-(2-(2-carboxyacetamido)propanamido)benzoic acid and 2-(2-((4-amino-1-carboxy-4-oxobutyl)amino)propanamido)benzoic acid. ChyC is involved in the same reactions as ChyD, but plays a more minor role in the amidation reactions compared to chyD. The oxidoreductases chyH and chyM are involved in oxidation reactions that form N-pyruvoylanthranilamide from 2-(2-aminopropanamido)benzamidine and (1-((2-carbamoylphenyl)amino)-1-oxopropan-2-yl)glutamine, respectively. N-pyruvoylanthranilamide is further converted via two further branches in the pathway, yielding chrysogine and additional chrysogine-related coumpounds. Chrysogine is likely formed by a spontaneous ring closure from N-pyruvoylanthranilamide. The polypeptide is Nonribosomal peptide synthetase chyA (Penicillium rubens (strain ATCC 28089 / DSM 1075 / NRRL 1951 / Wisconsin 54-1255) (Penicillium chrysogenum)).